The sequence spans 123 residues: WAP four-disulfide core domain protein 5 (123 aa).

Residues 1–24 form the signal peptide; that stretch reads MRTQSLLLLGALLAVGSQLPAVFG. WAP domains lie at 27–74 and 75–121; these read KGEK…VPRV and SVKL…RDPA. 8 disulfides stabilise this stretch: cysteine 34-cysteine 62, cysteine 41-cysteine 66, cysteine 49-cysteine 61, cysteine 55-cysteine 70, cysteine 81-cysteine 109, cysteine 88-cysteine 113, cysteine 96-cysteine 108, and cysteine 102-cysteine 117.

The protein resides in the secreted. Its function is as follows. Putative acid-stable proteinase inhibitor. The polypeptide is WAP four-disulfide core domain protein 5 (WFDC5) (Gorilla gorilla gorilla (Western lowland gorilla)).